A 410-amino-acid polypeptide reads, in one-letter code: Pyrophosphate--fructose 6-phosphate 1-phosphotransferase (410 aa).

Gly-12 provides a ligand contact to diphosphate. Asp-121 serves as a coordination point for Mg(2+). Residues 149–151, 194–196, Glu-266, and 323–326 each bind substrate; these read TID, MGR, and YFSR. The active-site Proton acceptor is Asp-151.

Belongs to the phosphofructokinase type A (PFKA) family. PPi-dependent PFK group II subfamily. Clade 'P' sub-subfamily. As to quaternary structure, homodimer or homotetramer. Mg(2+) serves as cofactor.

It localises to the cytoplasm. It catalyses the reaction beta-D-fructose 6-phosphate + diphosphate = beta-D-fructose 1,6-bisphosphate + phosphate + H(+). It functions in the pathway carbohydrate degradation; glycolysis; D-glyceraldehyde 3-phosphate and glycerone phosphate from D-glucose: step 3/4. Non-allosteric. Functionally, catalyzes the phosphorylation of D-fructose 6-phosphate, the first committing step of glycolysis. Uses inorganic phosphate (PPi) as phosphoryl donor instead of ATP like common ATP-dependent phosphofructokinases (ATP-PFKs), which renders the reaction reversible, and can thus function both in glycolysis and gluconeogenesis. Consistently, PPi-PFK can replace the enzymes of both the forward (ATP-PFK) and reverse (fructose-bisphosphatase (FBPase)) reactions. The chain is Pyrophosphate--fructose 6-phosphate 1-phosphotransferase from Mastigamoeba balamuthi (Phreatamoeba balamuthi).